The sequence spans 181 residues: Peptide deformylase (181 aa).

Fe cation is bound by residues Cys-99 and His-141. Residue Glu-142 is part of the active site. Residue His-145 coordinates Fe cation.

It belongs to the polypeptide deformylase family. Fe(2+) serves as cofactor.

It catalyses the reaction N-terminal N-formyl-L-methionyl-[peptide] + H2O = N-terminal L-methionyl-[peptide] + formate. Removes the formyl group from the N-terminal Met of newly synthesized proteins. Requires at least a dipeptide for an efficient rate of reaction. N-terminal L-methionine is a prerequisite for activity but the enzyme has broad specificity at other positions. The protein is Peptide deformylase of Chlamydia muridarum (strain MoPn / Nigg).